Here is a 276-residue protein sequence, read N- to C-terminus: Melibiose/raffinose/stachyose import permease protein MelC (276 aa).

Transmembrane regions (helical) follow at residues 11 to 31 (IITL…YILL), 74 to 94 (IITG…AYPL), 104 to 124 (AVFA…MVPL), 139 to 159 (IAIF…YSGF), 186 to 206 (IVFP…CVFI), and 240 to 260 (LHLV…LFLA). The ABC transmembrane type-1 domain occupies 69 to 261 (FINTMIITGF…LPMVVLFLAL (193 aa)).

Belongs to the binding-protein-dependent transport system permease family. In terms of assembly, the complex is composed of two ATP-binding proteins (MsmX), two transmembrane proteins (MelC and MelD) and a solute-binding protein (MelE).

It is found in the cell membrane. Its function is as follows. Part of the ABC transporter complex MelEDC-MsmX involved in melibiose, raffinose and stachyose import. Probably responsible for the translocation of the substrate across the membrane. The protein is Melibiose/raffinose/stachyose import permease protein MelC of Bacillus subtilis (strain 168).